The following is a 138-amino-acid chain: Cysteine desulfuration protein SufE (138 aa).

Cys51 (cysteine persulfide intermediate) is an active-site residue.

This sequence belongs to the SufE family. As to quaternary structure, homodimer. Interacts with SufS.

It localises to the cytoplasm. It participates in cofactor biosynthesis; iron-sulfur cluster biosynthesis. Its function is as follows. Participates in cysteine desulfuration mediated by SufS. Cysteine desulfuration mobilizes sulfur from L-cysteine to yield L-alanine and constitutes an essential step in sulfur metabolism for biosynthesis of a variety of sulfur-containing biomolecules. Functions as a sulfur acceptor for SufS, by mediating the direct transfer of the sulfur atom from the S-sulfanylcysteine of SufS, an intermediate product of cysteine desulfuration process. In Escherichia coli O81 (strain ED1a), this protein is Cysteine desulfuration protein SufE.